A 21-amino-acid polypeptide reads, in one-letter code: Nigrocin-2HSa (21 aa).

A disulfide bridge links Cys-15 with Cys-21.

As to expression, expressed by the skin glands.

It is found in the secreted. Its function is as follows. Has antibacterial activity against the Gram-positive bacterium S.aureus ATCC 25923 (MIC=56 uM) and the Gram-negative bacterium E.coli ATCC 25726 (MIC=28 uM). The sequence is that of Nigrocin-2HSa from Odorrana hosii (Hose's rock frog).